The primary structure comprises 892 residues: Protein translocase subunit SecA (892 aa).

Residues Gln-89, 107-111 (GEGKT), and Asp-517 contribute to the ATP site. Zn(2+) contacts are provided by Cys-879, Cys-881, Cys-890, and His-891.

It belongs to the SecA family. Monomer and homodimer. Part of the essential Sec protein translocation apparatus which comprises SecA, SecYEG and auxiliary proteins SecDF-YajC and YidC. Zn(2+) serves as cofactor.

It localises to the cell inner membrane. Its subcellular location is the cytoplasm. The enzyme catalyses ATP + H2O + cellular proteinSide 1 = ADP + phosphate + cellular proteinSide 2.. Functionally, part of the Sec protein translocase complex. Interacts with the SecYEG preprotein conducting channel. Has a central role in coupling the hydrolysis of ATP to the transfer of proteins into and across the cell membrane, serving as an ATP-driven molecular motor driving the stepwise translocation of polypeptide chains across the membrane. The polypeptide is Protein translocase subunit SecA (Ruthia magnifica subsp. Calyptogena magnifica).